The chain runs to 384 residues: Zinc finger CCCH domain-containing protein 12 (384 aa).

Disordered stretches follow at residues 1-32 (MSHH…NLGD) and 46-81 (WAMN…SAAS). Over residues 50 to 60 (PDNTSGDNNGP) the composition is skewed to polar residues. Residues 70 to 81 (SSSSATTTSAAS) show a composition bias toward low complexity. 2 C3H1-type zinc fingers span residues 91–118 (FFKT…HTVE) and 172–200 (SFKG…HDEA). Residues 211-231 (LGPGGYGSGGGGGSGGGSVGG) are disordered. Residues 212–231 (GPGGYGSGGGGGSGGGSVGG) are compositionally biased toward gly residues. The C3H1-type 3 zinc-finger motif lies at 260-288 (NWKTRICNKWEITGYCPFGAKCHFAHGAA). Residues 299–335 (EEEGKDGVSPNPDTKQTVQNPKGLSDTTTLLSPGVPH) form a disordered region. Polar residues predominate over residues 309–329 (NPDTKQTVQNPKGLSDTTTLL).

The chain is Zinc finger CCCH domain-containing protein 12 from Arabidopsis thaliana (Mouse-ear cress).